The sequence spans 86 residues: Heat shock factor-binding protein (86 aa).

Residues 34–63 (MSDSIITKIDDMGGRINELEQSINDLRAEM) are a coiled coil. The segment at 42–52 (IDDMGGRINEL) is required for interactions with heat shock factors (HSFs). Residues 59–86 (LRAEMGVEGTPPPASKSGDEPKTPASSS) are disordered.

Belongs to the HSBP1 family. As to quaternary structure, homohexamer. Interacts with HSFA1A, HSFA1B and HSFA2. As to expression, mostly expressed in siliques and flowers, and, to a lower extent, in roots, stems and leaves.

The protein localises to the nucleus. It localises to the cytoplasm. It is found in the cytosol. Its function is as follows. Negative regulator of the heat shock (HS) response. Affects negatively HSFA1B DNA-binding capacity in vitro. Involved in acquired thermotolerance but not basal thermotolerance. Crucial for seed development, after fertilization and during embryogenesis. The polypeptide is Heat shock factor-binding protein (Arabidopsis thaliana (Mouse-ear cress)).